The primary structure comprises 278 residues: MQVRQSIHSDHAKQLDTAGLRREFLIEKIFAADDYTMTYSHIDRIIVGGILPVSKAVSIGNEVGKQLGVSYFLERRELGAINIGGPGLIVVDGQTYDIGNEEALYVGKGAKEVKFSSIDRANPAKFYYNSAPAHTTYPNKKITLAEASPQTLGDDATSNRRTINKYIVPDVLPTCQLSMGLTKLAPGSLWNTMPCHTHERRMEVYFYFDMDEETAVFHMMGQPQETRHLLVHNEQAVISPSWSIHSGVGTKRYTFIWGMVGENQVFGDMDHIAVSELR.

Zn(2+)-binding residues include His196, His198, Glu203, and His245.

The protein belongs to the KduI family. Zn(2+) serves as cofactor.

The catalysed reaction is 5-dehydro-4-deoxy-D-glucuronate = 3-deoxy-D-glycero-2,5-hexodiulosonate. Its pathway is glycan metabolism; pectin degradation; 2-dehydro-3-deoxy-D-gluconate from pectin: step 4/5. Functionally, catalyzes the isomerization of 5-dehydro-4-deoxy-D-glucuronate to 3-deoxy-D-glycero-2,5-hexodiulosonate. This Yersinia pestis bv. Antiqua (strain Antiqua) protein is 4-deoxy-L-threo-5-hexosulose-uronate ketol-isomerase.